The sequence spans 194 residues: 3-isopropylmalate dehydratase small subunit (194 aa).

It belongs to the LeuD family. LeuD type 1 subfamily. In terms of assembly, heterodimer of LeuC and LeuD.

The catalysed reaction is (2R,3S)-3-isopropylmalate = (2S)-2-isopropylmalate. It participates in amino-acid biosynthesis; L-leucine biosynthesis; L-leucine from 3-methyl-2-oxobutanoate: step 2/4. In terms of biological role, catalyzes the isomerization between 2-isopropylmalate and 3-isopropylmalate, via the formation of 2-isopropylmaleate. The protein is 3-isopropylmalate dehydratase small subunit of Halalkalibacterium halodurans (strain ATCC BAA-125 / DSM 18197 / FERM 7344 / JCM 9153 / C-125) (Bacillus halodurans).